A 920-amino-acid polypeptide reads, in one-letter code: Ubiquitin ligase-binding protein BUL2 (920 aa).

Over residues 1 to 10 (MTFTFSTSSR) the composition is skewed to polar residues. Residues 1–89 (MTFTFSTSSR…EENSLEMDCT (89 aa)) form a disordered region. A Phosphothreonine modification is found at T22. The span at 35–57 (QQLSSNSTDNSLHPNSGQTPRAS) shows a compositional bias: polar residues. Residues 73–82 (DRLRQEREEN) show a composition bias toward basic and acidic residues. The PY-motif motif lies at 129-133 (FPPSY). Position 557 is a phosphoserine (S557).

Belongs to the BUL1 family. Component of the RSP5-BUL1/2 ubiquitin ligase complex composed of at least RSP5 and BUL1 or BUL2.

The protein resides in the cytoplasm. The protein operates within protein modification; protein ubiquitination. In terms of biological role, component of a RSP5 ubiquitin ligase complex which specifies polyubiquitination and intracellular trafficking of the general amino acid permease GAP1 as well as other permeases such as PMA1. The RSP5-BUL1/2 complex is also necessary for the heat-shock element (HSE)-mediated gene expression, nitrogen starvation GLN3-dependent transcription and pressure-induced differential regulation of the 2 tryptophan permeases TAT1 and TAT2. The chain is Ubiquitin ligase-binding protein BUL2 (BUL2) from Saccharomyces cerevisiae (strain ATCC 204508 / S288c) (Baker's yeast).